The chain runs to 741 residues: Protein lin-54 homolog (741 aa).

The CRC domain maps to 513 to 626 (PRKPCNCTKS…KCIGCKNFEE (114 aa)). The interval 515–528 (KPCNCTKSLCLKLY) is DNA-binding. Zn(2+)-binding residues include Cys517, Cys519, Cys524, Cys529, Cys531, Cys538, Cys541, Cys543, and Cys546. The segment at 575-588 (IGKGKEGESDRRHS) is linker. Cys591, Cys593, Cys598, Cys603, Cys605, Cys612, Cys616, Cys618, and Cys621 together coordinate Zn(2+). Residues 591–604 (CNCKRSGCLKNYCE) form a DNA-binding region.

It belongs to the lin-54 family. Component of the DREAM complex.

It localises to the nucleus. Functionally, component of the DREAM complex, a multiprotein complex that can both act as a transcription activator or repressor depending on the context. Specifically recognizes the consensus motif 5'-TTYRAA-3' in target DNA. The polypeptide is Protein lin-54 homolog (lin54) (Xenopus tropicalis (Western clawed frog)).